Here is a 337-residue protein sequence, read N- to C-terminus: Pantothenate synthetase (337 aa).

31–38 (MGALHEGH) contributes to the ATP binding site. The Proton donor role is filled by histidine 38. Position 65 (glutamine 65) interacts with (R)-pantoate. Glutamine 65 is a beta-alanine binding site. Residue 152–155 (GQKD) coordinates ATP. Glutamine 158 provides a ligand contact to (R)-pantoate. ATP is bound by residues valine 181 and 189–192 (LSSR).

The protein belongs to the pantothenate synthetase family. In terms of assembly, homodimer.

Its subcellular location is the cytoplasm. The catalysed reaction is (R)-pantoate + beta-alanine + ATP = (R)-pantothenate + AMP + diphosphate + H(+). The protein operates within cofactor biosynthesis; (R)-pantothenate biosynthesis; (R)-pantothenate from (R)-pantoate and beta-alanine: step 1/1. Its function is as follows. Catalyzes the condensation of pantoate with beta-alanine in an ATP-dependent reaction via a pantoyl-adenylate intermediate. The chain is Pantothenate synthetase from Streptomyces coelicolor (strain ATCC BAA-471 / A3(2) / M145).